We begin with the raw amino-acid sequence, 108 residues long: uncharacterized protein (108 aa).

Composition is skewed to basic and acidic residues over residues M1–V15 and K53–E69. Positions M1 to K77 are disordered.

This is an uncharacterized protein from Homo sapiens (Human).